Consider the following 210-residue polypeptide: Protein LURP-one-related 5 (210 aa).

Belongs to the LOR family.

Its function is as follows. Might be related to the phospholipid scramblase and tubby-like superfamily of membrane tethered transcription factors. This chain is Protein LURP-one-related 5, found in Arabidopsis thaliana (Mouse-ear cress).